The primary structure comprises 930 residues: Protein translocase subunit SecA (930 aa).

Residues glutamine 83, glycine 101–threonine 105, and aspartate 491 each bind ATP.

It belongs to the SecA family. As to quaternary structure, monomer and homodimer. Part of the essential Sec protein translocation apparatus which comprises SecA, SecYEG and auxiliary proteins SecDF. Other proteins may also be involved.

The protein localises to the cell inner membrane. It is found in the cellular thylakoid membrane. It localises to the cytoplasm. It catalyses the reaction ATP + H2O + cellular proteinSide 1 = ADP + phosphate + cellular proteinSide 2.. Functionally, part of the Sec protein translocase complex. Interacts with the SecYEG preprotein conducting channel. Has a central role in coupling the hydrolysis of ATP to the transfer of proteins into and across the cell membrane, serving as an ATP-driven molecular motor driving the stepwise translocation of polypeptide chains across the membrane. In terms of biological role, probably participates in protein translocation into and across both the cytoplasmic and thylakoid membranes in cyanobacterial cells. The sequence is that of Protein translocase subunit SecA from Nostoc sp. (strain PCC 7120 / SAG 25.82 / UTEX 2576).